Here is a 410-residue protein sequence, read N- to C-terminus: Zinc finger TRAF-type-containing protein 1 (410 aa).

Residues 1–13 are compositionally biased toward gly residues; sequence MSGAEEAGGGGPA. A disordered region spans residues 1–22; the sequence is MSGAEEAGGGGPAAGPAGSVPA. Residues 117-162 form an RING-type; degenerate zinc finger; sequence CTVCLDLPKASVYQCTNGHLMCAGCFIHLLADARLKEEQATCPNCR. The segment at 158 to 231 adopts a TRAF-type zinc-finger fold; the sequence is CPNCRCEISK…PWHGPFHELT (74 aa).

Belongs to the ZFTRAF1 family. As to quaternary structure, interacts with LGALS3.

The protein localises to the cytoplasm. The protein resides in the perinuclear region. This chain is Zinc finger TRAF-type-containing protein 1, found in Bos taurus (Bovine).